Consider the following 350-residue polypeptide: MKKIKVLCVDDSALVRGLMTEIINSHPDMEVVATAPDPLVARELIKKHNPDVLTLDVEMPRMDGLDFLEKLMRLRPMPVVMVSSLTERGGEITLRALELGAIDFVTKPKLGIRDGLIEYSEVIADKIRAASRARLRALAPASHAAPLRLRSPFASSEKLVIVGASTGGTEAIREVLQPLPADSPAILITQHMLAGFTRSFAQRLDALCAVTVREASDGERVLPGHVYLAPGGETHMRLGRSGANYVIGLQASEPVNRHRPSVDVLFHSAAEAAGGNAIGVILTGMGKDGAAGLLAMKRAGARTMAQDEASCVVFGMPREAIALGAADEVVPLADISERILTRLGDRGHRV.

Positions Lys5–Val122 constitute a Response regulatory domain. Asp56 is subject to 4-aspartylphosphate. Residues Pro152 to Arg346 enclose the CheB-type methylesterase domain. Active-site residues include Ser165, His191, and Asp288.

It belongs to the CheB family. Post-translationally, phosphorylated by CheA. Phosphorylation of the N-terminal regulatory domain activates the methylesterase activity.

It is found in the cytoplasm. It carries out the reaction [protein]-L-glutamate 5-O-methyl ester + H2O = L-glutamyl-[protein] + methanol + H(+). The catalysed reaction is L-glutaminyl-[protein] + H2O = L-glutamyl-[protein] + NH4(+). In terms of biological role, involved in chemotaxis. Part of a chemotaxis signal transduction system that modulates chemotaxis in response to various stimuli. Catalyzes the demethylation of specific methylglutamate residues introduced into the chemoreceptors (methyl-accepting chemotaxis proteins or MCP) by CheR. Also mediates the irreversible deamidation of specific glutamine residues to glutamic acid. The polypeptide is Protein-glutamate methylesterase/protein-glutamine glutaminase (Bordetella pertussis (strain Tohama I / ATCC BAA-589 / NCTC 13251)).